Reading from the N-terminus, the 359-residue chain is DNA replication and repair protein RecF (359 aa).

Residue 30-37 (GPNGSGKT) participates in ATP binding.

It belongs to the RecF family.

The protein resides in the cytoplasm. In terms of biological role, the RecF protein is involved in DNA metabolism; it is required for DNA replication and normal SOS inducibility. RecF binds preferentially to single-stranded, linear DNA. It also seems to bind ATP. The polypeptide is DNA replication and repair protein RecF (Vibrio vulnificus (strain YJ016)).